The chain runs to 604 residues: UvrABC system protein C (604 aa).

The GIY-YIG domain occupies 17-95 (AQPGVYRMLN…IKSLAPRYNI (79 aa)). The 36-residue stretch at 204 to 239 (DEVLKTIEQKMFTASDQQDYEQAAQLRDQMQALRKI) folds into the UVR domain.

This sequence belongs to the UvrC family. As to quaternary structure, interacts with UvrB in an incision complex.

The protein resides in the cytoplasm. In terms of biological role, the UvrABC repair system catalyzes the recognition and processing of DNA lesions. UvrC both incises the 5' and 3' sides of the lesion. The N-terminal half is responsible for the 3' incision and the C-terminal half is responsible for the 5' incision. The chain is UvrABC system protein C from Nitrosomonas europaea (strain ATCC 19718 / CIP 103999 / KCTC 2705 / NBRC 14298).